We begin with the raw amino-acid sequence, 210 residues long: uncharacterized protein (210 aa).

This is an uncharacterized protein from Sulfolobus islandicus filamentous virus (isolate Iceland/Hveragerdi) (SIFV).